A 691-amino-acid chain; its full sequence is ATP-dependent RNA helicase MRH4, mitochondrial (691 aa).

A mitochondrion-targeting transit peptide spans 1–31 (MLIGQVSRLSAIPPLALQHTLRPLHSSSVLA). Positions 31–148 (AAGGKRPKQS…ATMPPNLTPR (118 aa)) are disordered. A compositionally biased stretch (polar residues) spans 39-49 (QSPSHSRNSPR). Residues 50–68 (QKPDWEKRGSNRGRSEQPR) show a composition bias toward basic and acidic residues. Over residues 94–103 (SDSSSGSSAS) the composition is skewed to low complexity. Residues 111-126 (VPTSSRRLLPFSSSDT) are compositionally biased toward polar residues. The short motif at 183–213 (RTFDDFGLEEGLVKSLKGLYGEDGKTTPIET) is the Q motif element. The 209-residue stretch at 225 to 433 (ASAPIGSQRV…TTNPFFTKKE (209 aa)) folds into the Helicase ATP-binding domain. 238-245 (AETGSGKT) is an ATP binding site. The DEAD box motif lies at 382–385 (DEAD). Positions 474-691 (TLAEDAKAAK…VGAMGKRVRT (218 aa)) constitute a Helicase C-terminal domain. The disordered stretch occupies residues 644-667 (LGEGAKNNKGGKGQGPLKKDGKTA).

It belongs to the DEAD box helicase family. MRH4 subfamily.

The protein resides in the mitochondrion. It catalyses the reaction ATP + H2O = ADP + phosphate + H(+). ATP-binding RNA helicase involved in mitochondrial RNA metabolism. Required for maintenance of mitochondrial DNA. The chain is ATP-dependent RNA helicase MRH4, mitochondrial (MRH4) from Cryptococcus neoformans var. neoformans serotype D (strain JEC21 / ATCC MYA-565) (Filobasidiella neoformans).